The chain runs to 297 residues: Phosphoribosylaminoimidazole-succinocarboxamide synthase (297 aa).

This sequence belongs to the SAICAR synthetase family.

It carries out the reaction 5-amino-1-(5-phospho-D-ribosyl)imidazole-4-carboxylate + L-aspartate + ATP = (2S)-2-[5-amino-1-(5-phospho-beta-D-ribosyl)imidazole-4-carboxamido]succinate + ADP + phosphate + 2 H(+). It functions in the pathway purine metabolism; IMP biosynthesis via de novo pathway; 5-amino-1-(5-phospho-D-ribosyl)imidazole-4-carboxamide from 5-amino-1-(5-phospho-D-ribosyl)imidazole-4-carboxylate: step 1/2. The chain is Phosphoribosylaminoimidazole-succinocarboxamide synthase from Mycobacterium marinum (strain ATCC BAA-535 / M).